The chain runs to 222 residues: Phosphoglycolate phosphatase (222 aa).

Asp8 serves as the catalytic Nucleophile. The Mg(2+) site is built by Asp8 and Asp10. Residue Lys146 coordinates substrate. 2 residues coordinate Mg(2+): Asp169 and Asp173.

The protein belongs to the archaeal SPP-like hydrolase family. Mg(2+) serves as cofactor.

It carries out the reaction 2-phosphoglycolate + H2O = glycolate + phosphate. Catalyzes the dephosphorylation of 2-phosphoglycolate. In Methanothrix thermoacetophila (strain DSM 6194 / JCM 14653 / NBRC 101360 / PT) (Methanosaeta thermophila), this protein is Phosphoglycolate phosphatase.